A 118-amino-acid polypeptide reads, in one-letter code: MARIAGVNLPAQKHVWVGLQSIYGIGRTRSKKLCESAGVTSTTKIRDLSEPEIERLRAEVGKYVVEGDLRREIGIAIKRLMDLGCYRGLRHRRGLPLRGQRTRTNARTRKGPRKAIRK.

The tract at residues 94–118 (GLPLRGQRTRTNARTRKGPRKAIRK) is disordered.

The protein belongs to the universal ribosomal protein uS13 family. As to quaternary structure, part of the 30S ribosomal subunit. Forms a loose heterodimer with protein S19. Forms two bridges to the 50S subunit in the 70S ribosome.

Its function is as follows. Located at the top of the head of the 30S subunit, it contacts several helices of the 16S rRNA. In the 70S ribosome it contacts the 23S rRNA (bridge B1a) and protein L5 of the 50S subunit (bridge B1b), connecting the 2 subunits; these bridges are implicated in subunit movement. Contacts the tRNAs in the A and P-sites. The chain is Small ribosomal subunit protein uS13 from Xanthomonas axonopodis pv. citri (strain 306).